Consider the following 190-residue polypeptide: MGLKSDKWIREQSIKNGMITPFCEENMGVGVVSYGLSSYGYDIRVADEFKIFTNVGGTVVDPKNFDEKNIVDFKGDVCIVPPNSFALARTIEYFKMPRDVLAICLGKSTYARCGIIVNVTPFEPGFEGHITIEISNTTPLPAKIYANEGIAQVLFLQGDEICEVSYADKKGKYQRQKGITLPRILEGDKK.

107-112 lines the dCTP pocket; it reads KSTYAR. The Proton donor/acceptor role is filled by Glu133. Gln152, Tyr166, and Gln176 together coordinate dCTP.

This sequence belongs to the dCTP deaminase family. In terms of assembly, homotrimer.

The enzyme catalyses dCTP + H2O + H(+) = dUTP + NH4(+). Its pathway is pyrimidine metabolism; dUMP biosynthesis; dUMP from dCTP (dUTP route): step 1/2. In terms of biological role, catalyzes the deamination of dCTP to dUTP. The polypeptide is dCTP deaminase (Campylobacter hominis (strain ATCC BAA-381 / DSM 21671 / CCUG 45161 / LMG 19568 / NCTC 13146 / CH001A)).